The primary structure comprises 240 residues: T4 protein (240 aa).

It belongs to the poxviruses B9 family.

In Sheeppox virus (strain InS-1) (SPPV), this protein is T4 protein.